The sequence spans 1129 residues: Ubiquitin carboxyl-terminal hydrolase 7 (1129 aa).

The disordered stretch occupies residues 1–20 (MEIETDQSIEAMDTQDTQEV). The 122-residue stretch at 101 to 222 (ETTFSFTVEN…NNSITLEVHV (122 aa)) folds into the MATH domain. One can recognise a USP domain in the interval 241-548 (VGLKNQGATC…NAYMLVYIRQ (308 aa)). The Nucleophile role is filled by cysteine 250. The Proton acceptor role is filled by histidine 490. A Phosphoserine modification is found at serine 1117.

Belongs to the peptidase C19 family.

Its subcellular location is the nucleus. The enzyme catalyses Thiol-dependent hydrolysis of ester, thioester, amide, peptide and isopeptide bonds formed by the C-terminal Gly of ubiquitin (a 76-residue protein attached to proteins as an intracellular targeting signal).. Functionally, hydrolase that deubiquitinates target proteins. The sequence is that of Ubiquitin carboxyl-terminal hydrolase 7 (Usp7) from Drosophila melanogaster (Fruit fly).